We begin with the raw amino-acid sequence, 364 residues long: Dual-specificity RNA methyltransferase RlmN (364 aa).

The Proton acceptor role is filled by E91. In terms of domain architecture, Radical SAM core spans 97–333 (ESDRGTLCIS…VTVRKTRGDD (237 aa)). C104 and C338 form a disulfide bridge. [4Fe-4S] cluster contacts are provided by C111, C115, and C118. Residues 164 to 165 (GE), S196, 218 to 220 (SLH), and N295 each bind S-adenosyl-L-methionine. C338 (S-methylcysteine intermediate) is an active-site residue.

The protein belongs to the radical SAM superfamily. RlmN family. [4Fe-4S] cluster serves as cofactor.

The protein resides in the cytoplasm. It carries out the reaction adenosine(2503) in 23S rRNA + 2 reduced [2Fe-2S]-[ferredoxin] + 2 S-adenosyl-L-methionine = 2-methyladenosine(2503) in 23S rRNA + 5'-deoxyadenosine + L-methionine + 2 oxidized [2Fe-2S]-[ferredoxin] + S-adenosyl-L-homocysteine. The enzyme catalyses adenosine(37) in tRNA + 2 reduced [2Fe-2S]-[ferredoxin] + 2 S-adenosyl-L-methionine = 2-methyladenosine(37) in tRNA + 5'-deoxyadenosine + L-methionine + 2 oxidized [2Fe-2S]-[ferredoxin] + S-adenosyl-L-homocysteine. In terms of biological role, specifically methylates position 2 of adenine 2503 in 23S rRNA and position 2 of adenine 37 in tRNAs. m2A2503 modification seems to play a crucial role in the proofreading step occurring at the peptidyl transferase center and thus would serve to optimize ribosomal fidelity. The protein is Dual-specificity RNA methyltransferase RlmN of Neisseria meningitidis serogroup B (strain ATCC BAA-335 / MC58).